The sequence spans 142 residues: uncharacterized protein (142 aa).

Helical transmembrane passes span 12 to 29 (NAILRPISDIFVLIYGLL) and 44 to 66 (IYGQLSLLLWGTKFLATILGVTA).

The protein localises to the cell membrane. This is an uncharacterized protein from Archaeoglobus fulgidus (strain ATCC 49558 / DSM 4304 / JCM 9628 / NBRC 100126 / VC-16).